The primary structure comprises 414 residues: Nuclear pore complex-interacting protein family member B7 (414 aa).

An N-terminal signal peptide occupies residues 1–18 (MRLRFWLLIWLLLGFISH). The N-linked (GlcNAc...) asparagine glycan is linked to N111. Disordered regions lie at residues 242 to 262 (RMGR…NSLS) and 335 to 402 (SPLP…LRTR). A compositionally biased stretch (polar residues) spans 252-262 (QQHSITDNSLS). Residues 356–384 (EVEKPPKPKRWRVDEVEQSPKPKRQREAE) show a composition bias toward basic and acidic residues. A compositionally biased stretch (basic residues) spans 390-402 (KPKRRRLSKLRTR).

Belongs to the NPIP family.

It localises to the secreted. This Homo sapiens (Human) protein is Nuclear pore complex-interacting protein family member B7 (NPIPB7).